A 589-amino-acid polypeptide reads, in one-letter code: Transmembrane 9 superfamily member 1 (589 aa).

The N-terminal stretch at 1 to 24 is a signal peptide; the sequence is MPSSSSAAVLVFLLLVSLLTPTFA. Residues 25–222 lie on the Lumenal side of the membrane; that stretch reads SDSDHKYQAE…YPFFEHQIHW (198 aa). The helical transmembrane segment at 223 to 243 threads the bilayer; it reads FSIFNSFMMVIFLTGLVSMIL. Residues 244-293 lie on the Cytoplasmic side of the membrane; the sequence is MRTLRNDYAKYAREDDDLESLERDVSEESGWKLVHGDVFRPASSLVLLSA. Residues 294-314 form a helical membrane-spanning segment; that stretch reads VVGTGAQLALLVLLVILMAIV. Over 315-321 the chain is Lumenal; it reads GTLYVGR. A helical transmembrane segment spans residues 322-342; that stretch reads GAIVTTFIVCYALTSFVSGYV. Residues 343 to 364 lie on the Cytoplasmic side of the membrane; sequence SGGMYSRSGGKHWIKCMVLTAS. A helical transmembrane segment spans residues 365–385; it reads LFPFLCFGIGFLLNTIAIFYG. The Lumenal segment spans residues 386–395; sequence SLAAIPFGTM. A helical transmembrane segment spans residues 396–416; sequence VVVFVIWGFISFPLALLGTVV. Residues 417–448 lie on the Cytoplasmic side of the membrane; the sequence is GRNWSGAPNNPCRVKTIPRPIPEKKWYLTPSV. A helical transmembrane segment spans residues 449–469; sequence VSLMGGLLPFGSIFIEMYFVF. Topologically, residues 470-481 are lumenal; the sequence is TSFWNYKVYYVY. A helical membrane pass occupies residues 482-502; the sequence is GFMLLVFVILVIVTVCVTIVG. Residues 503-518 lie on the Cytoplasmic side of the membrane; the sequence is TYFLLNAENYHWQWTS. A helical membrane pass occupies residues 519-539; that stretch reads FFSAASTAVYVYLYSIYYYYV. Topologically, residues 540 to 550 are lumenal; that stretch reads KTKMSGFFQTS. A helical transmembrane segment spans residues 551-571; that stretch reads FYFGYTMMFCLGLGILCGAVG. The Cytoplasmic segment spans residues 572-589; that stretch reads YLGSNLFVRRIYRNIKCD. The Endoplasmic reticulum export signal motif lies at 578-583; that stretch reads FVRRIY. Residues 587–589 carry the Golgi retention signal motif; that stretch reads KCD.

It belongs to the nonaspanin (TM9SF) (TC 9.A.2) family. Ubiquitous.

It is found in the endosome membrane. Its subcellular location is the golgi apparatus membrane. This Arabidopsis thaliana (Mouse-ear cress) protein is Transmembrane 9 superfamily member 1.